An 89-amino-acid polypeptide reads, in one-letter code: Cell division topological specificity factor (89 aa).

It belongs to the MinE family.

In terms of biological role, prevents the cell division inhibition by proteins MinC and MinD at internal division sites while permitting inhibition at polar sites. This ensures cell division at the proper site by restricting the formation of a division septum at the midpoint of the long axis of the cell. This chain is Cell division topological specificity factor, found in Janthinobacterium sp. (strain Marseille) (Minibacterium massiliensis).